A 608-amino-acid polypeptide reads, in one-letter code: Kelch-like protein 10 (608 aa).

Residues Cys-39–Pro-106 enclose the BTB domain. Kelch repeat units lie at residues Ile-292–Gly-339, Tyr-340–Asn-386, Ile-388–Gly-433, Lys-434–Glu-480, His-481–Asp-527, and Leu-529–Gly-574. A Phosphoserine modification is found at Ser-501.

As to quaternary structure, self-associates. Interacts with CUL3; indicative for the participation in an E3 ubiquitin ligase complex. Testis specific.

It localises to the cytoplasm. Its pathway is protein modification; protein ubiquitination. May be a substrate-specific adapter of a CUL3-based E3 ubiquitin-protein ligase complex which mediates the ubiquitination and subsequent proteasomal degradation of target proteins during spermatogenesis. Required for male fertility. This chain is Kelch-like protein 10 (Klhl10), found in Mus musculus (Mouse).